Here is a 968-residue protein sequence, read N- to C-terminus: Glycine dehydrogenase (decarboxylating) (968 aa).

K717 carries the post-translational modification N6-(pyridoxal phosphate)lysine.

This sequence belongs to the GcvP family. The glycine cleavage system is composed of four proteins: P, T, L and H. Requires pyridoxal 5'-phosphate as cofactor.

The enzyme catalyses N(6)-[(R)-lipoyl]-L-lysyl-[glycine-cleavage complex H protein] + glycine + H(+) = N(6)-[(R)-S(8)-aminomethyldihydrolipoyl]-L-lysyl-[glycine-cleavage complex H protein] + CO2. Functionally, the glycine cleavage system catalyzes the degradation of glycine. The P protein binds the alpha-amino group of glycine through its pyridoxal phosphate cofactor; CO(2) is released and the remaining methylamine moiety is then transferred to the lipoamide cofactor of the H protein. The sequence is that of Glycine dehydrogenase (decarboxylating) from Tropheryma whipplei (strain TW08/27) (Whipple's bacillus).